The following is a 155-amino-acid chain: MNLEIYLTGKVKTKFILEGVEQYLKWIRPYHKIKITSFPLAGSTSANRDQIKKKEGERYLKALQNEKNVVVLHERGEELSSMEFATFIKKWQNSGTRKLIFIIGGPLGFSDNVLSQNWKKLSLSRMTFTHEMALLVLLEQLYRAETINRGMIYHY.

S-adenosyl-L-methionine-binding positions include L72, G104, and L123–F128.

It belongs to the RNA methyltransferase RlmH family. As to quaternary structure, homodimer.

The protein resides in the cytoplasm. The catalysed reaction is pseudouridine(1915) in 23S rRNA + S-adenosyl-L-methionine = N(3)-methylpseudouridine(1915) in 23S rRNA + S-adenosyl-L-homocysteine + H(+). In terms of biological role, specifically methylates the pseudouridine at position 1915 (m3Psi1915) in 23S rRNA. The sequence is that of Ribosomal RNA large subunit methyltransferase H from Kosmotoga olearia (strain ATCC BAA-1733 / DSM 21960 / TBF 19.5.1).